The chain runs to 824 residues: MASYPGPGKSKAKYPFKKRAGLQASAAAPEARSGLGASPLQSARSLPGNAPCLKHFPLDLRTSMDGKCKEIAEELFSRSLAESELRSAPYEFPEESPIEQLEERRQRLERQISQDVKLEPDILLRAKQDFLKTDSDSDLQLYKEQGEGQGDRGLWERDVVLEREFQRVIISGEEKCGVPFTDLLDAAKSVVRALFIREKYMALSLQSFCPTTRRYLQQLAEKPLETRTYEQSPDTPVSADAPVHPPALEQHPYEHCEPSAMPGDLGLGLRMVRGVVHVYTRRDPDEHCPEVELPYPDLQEFVADVNVLMALIINGPIKSFCYRRLQYLSSKFQMHVLLNEMKELAAQKKVPHRDFYNIRKVDTHIHASSCMNQKHLLRFIKRAMKRHLEEIVHVEQGREQTLREVFESMNLTAYDLSVDTLDVHADRNTFHRFDKFNAKYNPIGESVLREIFIKTDNKISGKYFAHIIKEVMADLEESKYQNAELRLSIYGRSRDEWDKLARWAVNHKVHSPNVRWLVQVPRLFDVYRTKGQLANFQEMLENIFLPLFEATVHPASHPELHLFLEHVDGFDSVDDESKPENHVFNLESPLPEAWVEEDNPPYAYYLYYTFANMAMLNHLRRQRGFHTFVLRPHCGEAGPIHHLVSAFMLAENISHGLLLRKAPVLQYLYYLAQIGIAMSPLSNNSLFLSYHRNPLPEYLSRGLMVSLSTDDPLQFHFTKEPLMEEYSIATQVWKLSSCDMCELARNSVLMSGFSHKVKSHWLGPNYTKEGPEGNDIRRTNVPDIRVGYRYETLCQELALITQAVQSEMLETIPEEVGIVMSPGP.

Residues 1–43 (MASYPGPGKSKAKYPFKKRAGLQASAAAPEARSGLGASPLQSA) are disordered. Basic residues predominate over residues 10–20 (SKAKYPFKKRA). The residue at position 44 (Arg44) is an Omega-N-methylarginine. Phosphoserine is present on residues Ser45, Ser63, and Ser79. Phosphotyrosine is present on Tyr90. Residues Ser96 and Ser113 each carry the phosphoserine modification. Residue Thr133 is modified to Phosphothreonine. Ser135 and Ser137 each carry phosphoserine. Zn(2+) contacts are provided by His364 and His366. Substrate-binding positions include His366 and 435-440 (KFNAKY). His633 is a binding site for Zn(2+). Glu636 lines the substrate pocket. His655 functions as the Proton acceptor in the catalytic mechanism. Asp710 contributes to the Zn(2+) binding site. 711–714 (DPLQ) provides a ligand contact to substrate.

This sequence belongs to the metallo-dependent hydrolases superfamily. Adenosine and AMP deaminases family. Homotetramer. Zn(2+) is required as a cofactor.

The enzyme catalyses AMP + H2O + H(+) = IMP + NH4(+). Its pathway is purine metabolism; IMP biosynthesis via salvage pathway; IMP from AMP: step 1/1. Functionally, AMP deaminase plays a critical role in energy metabolism. Catalyzes the deamination of AMP to IMP and plays an important role in the purine nucleotide cycle. The chain is AMP deaminase 2 from Mus musculus (Mouse).